Here is a 190-residue protein sequence, read N- to C-terminus: MRGLRPALSTFIFLLLITGGVYPLLTTVLGQWWFPWQANGSLIREGDTVRGSALIGQNFTGNGYFQGRPSATAEMPYNPQASGGSNLAVSNPELDKQIAARVAALRAANPDASTNVPVELVTASASGLDNNITPQAAAWQIPRVAKARNLSVEQLTQLIAKYSQQPLVKYIGQPVINIVELNLALDKLDE.

A helical transmembrane segment spans residues 10–30; the sequence is TFIFLLLITGGVYPLLTTVLG.

It belongs to the KdpC family. As to quaternary structure, the system is composed of three essential subunits: KdpA, KdpB and KdpC.

It localises to the cell inner membrane. In terms of biological role, part of the high-affinity ATP-driven potassium transport (or Kdp) system, which catalyzes the hydrolysis of ATP coupled with the electrogenic transport of potassium into the cytoplasm. This subunit acts as a catalytic chaperone that increases the ATP-binding affinity of the ATP-hydrolyzing subunit KdpB by the formation of a transient KdpB/KdpC/ATP ternary complex. The protein is Potassium-transporting ATPase KdpC subunit of Escherichia coli O139:H28 (strain E24377A / ETEC).